Consider the following 283-residue polypeptide: Thymidylate synthase (283 aa).

Residue arginine 22 participates in dUMP binding. The active-site Nucleophile is the cysteine 160. DUMP contacts are provided by residues 180–183 (RSCD), asparagine 191, and 221–223 (HIY). Aspartate 183 is a binding site for (6R)-5,10-methylene-5,6,7,8-tetrahydrofolate. Residue serine 282 coordinates (6R)-5,10-methylene-5,6,7,8-tetrahydrofolate.

This sequence belongs to the thymidylate synthase family. Bacterial-type ThyA subfamily. Homodimer.

Its subcellular location is the cytoplasm. The enzyme catalyses dUMP + (6R)-5,10-methylene-5,6,7,8-tetrahydrofolate = 7,8-dihydrofolate + dTMP. It functions in the pathway pyrimidine metabolism; dTTP biosynthesis. Its function is as follows. Catalyzes the reductive methylation of 2'-deoxyuridine-5'-monophosphate (dUMP) to 2'-deoxythymidine-5'-monophosphate (dTMP) while utilizing 5,10-methylenetetrahydrofolate (mTHF) as the methyl donor and reductant in the reaction, yielding dihydrofolate (DHF) as a by-product. This enzymatic reaction provides an intracellular de novo source of dTMP, an essential precursor for DNA biosynthesis. The chain is Thymidylate synthase from Vibrio cholerae serotype O1 (strain ATCC 39541 / Classical Ogawa 395 / O395).